The primary structure comprises 131 residues: Colicin-N immunity protein (131 aa).

2 helical membrane-spanning segments follow: residues 66-84 (ILTPFTILYISMIYCFLLT) and 104-124 (VFVFFLYNTIYWDIYIHIFVL).

The protein resides in the cell membrane. The sequence is that of Colicin-N immunity protein (cni) from Escherichia coli.